The following is a 415-amino-acid chain: Glucose-1-phosphate adenylyltransferase (415 aa).

Residues Tyr98, Gly163, 178-179 (EK), and Ser189 contribute to the alpha-D-glucose 1-phosphate site.

It belongs to the bacterial/plant glucose-1-phosphate adenylyltransferase family. As to quaternary structure, homotetramer.

The catalysed reaction is alpha-D-glucose 1-phosphate + ATP + H(+) = ADP-alpha-D-glucose + diphosphate. Its pathway is glycan biosynthesis; glycogen biosynthesis. Its function is as follows. Involved in the biosynthesis of ADP-glucose, a building block required for the elongation reactions to produce glycogen. Catalyzes the reaction between ATP and alpha-D-glucose 1-phosphate (G1P) to produce pyrophosphate and ADP-Glc. The protein is Glucose-1-phosphate adenylyltransferase of Fervidobacterium nodosum (strain ATCC 35602 / DSM 5306 / Rt17-B1).